A 626-amino-acid chain; its full sequence is Glyco-Gag protein (626 aa).

Residues L1 to P67 are Cytoplasmic-facing. A helical transmembrane segment spans residues V68–S86. The Extracellular portion of the chain corresponds to E87–D626. Residue N113 is glycosylated (N-linked (GlcNAc...) asparagine; by host). Pro residues-rich tracts occupy residues P199 to T212 and D249 to P261. Residues P199 to R306 form a disordered region. A glycan (N-linked (GlcNAc...) asparagine; by host) is linked at N480. Basic and acidic residues-rich tracts occupy residues R522–R554 and R574–K607. Residues R522–D626 are disordered. The CCHC-type zinc finger occupies D590–K607.

In terms of processing, glycosylated by host. Cleaved by host near the middle of the molecule, releasing the c-terminal half containing capsid and nucleoprotein domains op GAG.

Its subcellular location is the host cell membrane. In terms of biological role, plays a role in viral particle release. Presumably acts by facilitating the fission of the virion bud at the cell surface. May prevent the antiviral activity of murine APOBEC3. This is Glyco-Gag protein from Mus musculus (Mouse).